The following is a 254-amino-acid chain: 5-oxoprolinase subunit A (254 aa).

The protein belongs to the LamB/PxpA family. Forms a complex composed of PxpA, PxpB and PxpC.

It carries out the reaction 5-oxo-L-proline + ATP + 2 H2O = L-glutamate + ADP + phosphate + H(+). In terms of biological role, catalyzes the cleavage of 5-oxoproline to form L-glutamate coupled to the hydrolysis of ATP to ADP and inorganic phosphate. The polypeptide is 5-oxoprolinase subunit A (Burkholderia ambifaria (strain MC40-6)).